Reading from the N-terminus, the 20-residue chain is Putative phosphoglycerate kinase (20 aa).

The protein belongs to the phosphoglycerate kinase family. Monomer.

Its subcellular location is the cytoplasm. The enzyme catalyses (2R)-3-phosphoglycerate + ATP = (2R)-3-phospho-glyceroyl phosphate + ADP. It participates in carbohydrate degradation; glycolysis; pyruvate from D-glyceraldehyde 3-phosphate: step 2/5. The sequence is that of Putative phosphoglycerate kinase (pgk) from Clostridium pasteurianum.